The chain runs to 572 residues: MLFIIRARACGGDARSWKQPDQLHPILFTNLRLPLQLIASSAGGATDHNVDNTTGMLQEWLAAVGRDYATVVWKSEDEARSYPDEQGPKHWTRERHQFLMELKQEALAFARDWGADYILFADTDNILTNNQTLRLLIDRQLPVVAPMLDSQTYYSNFWCGITPQGYYRRTAEYFPTKNRQRQGCFRVPMVHSTFLVSLQTEETARLAFYPPHPNYTWPFDDIIVFAYACQAAGVSVHVCNDHRYGYMNVGVKPHQGLEEEKTNFIHLILEALVDGPPMMASAHVSRPPKKPSKMGFDEVFVISLARRPQRRARMLSSLWEMEISARVVDAVDGRTLNSSILKHLGVDLLPGYQDPYSGRTLTKGEVGCFLSHYSIWEEVVAKGLARVVVFEDDVRFEDNFRKRLERLMEDVLTQKLSWDLIYLGRKQVNPEEEVAVEGLPGLVVAGYSYWTLAYTLSLAGARKLLASQPLHRMLPVDEFLPVMFDRHPNDQYKAHFWPRDLQAFSARPLLASPTHYAGDTEWLSDTETSSPWDDDSGRLISWTGSQKTLRGPYLHLAGSSGHSLHPHPRDEL.

N-linked (GlcNAc...) asparagine glycans are attached at residues N52, N130, N214, and N337. Positions 569-572 (RDEL) match the Prevents secretion from ER motif.

This sequence belongs to the glycosyltransferase 25 family.

The protein localises to the endoplasmic reticulum lumen. Functionally, probable cell adhesion protein involved in leukocyte transmigration across the blood-brain barrier. Does not express any beta-galactosyltransferase activity in vitro. In Rattus norvegicus (Rat), this protein is Probable inactive glycosyltransferase 25 family member 3 (Cercam).